The primary structure comprises 310 residues: Phosphoribosylaminoimidazole-succinocarboxamide synthase (310 aa).

The protein belongs to the SAICAR synthetase family.

It carries out the reaction 5-amino-1-(5-phospho-D-ribosyl)imidazole-4-carboxylate + L-aspartate + ATP = (2S)-2-[5-amino-1-(5-phospho-beta-D-ribosyl)imidazole-4-carboxamido]succinate + ADP + phosphate + 2 H(+). It functions in the pathway purine metabolism; IMP biosynthesis via de novo pathway; 5-amino-1-(5-phospho-D-ribosyl)imidazole-4-carboxamide from 5-amino-1-(5-phospho-D-ribosyl)imidazole-4-carboxylate: step 1/2. The chain is Phosphoribosylaminoimidazole-succinocarboxamide synthase from Xanthomonas oryzae pv. oryzae (strain MAFF 311018).